Reading from the N-terminus, the 449-residue chain is Tubulin alpha-1C chain (449 aa).

Residues 1-4 carry the MREC motif motif; that stretch reads MREC. Gln11 serves as a coordination point for GTP. Position 40 is an N6-acetyllysine (Lys40). Residues Glu71, Ser140, Gly144, Thr145, Thr179, Asn206, and Asn228 each contribute to the GTP site. Glu71 is a Mg(2+) binding site. The active site involves Glu254. 3'-nitrotyrosine is present on Tyr282. Residues 429 to 449 are disordered; the sequence is EKDYEEVGADSAEGDDEGDEY. Residues 431–449 show a composition bias toward acidic residues; the sequence is DYEEVGADSAEGDDEGDEY. Tyr432 is subject to Phosphotyrosine. Position 439 is a phosphoserine (Ser439). Residue Tyr449 is modified to 3'-nitrotyrosine.

This sequence belongs to the tubulin family. In terms of assembly, dimer of alpha and beta chains. A typical microtubule is a hollow water-filled tube with an outer diameter of 25 nm and an inner diameter of 15 nM. Alpha-beta heterodimers associate head-to-tail to form protofilaments running lengthwise along the microtubule wall with the beta-tubulin subunit facing the microtubule plus end conferring a structural polarity. Microtubules usually have 13 protofilaments but different protofilament numbers can be found in some organisms and specialized cells. The cofactor is Mg(2+). Some glutamate residues at the C-terminus are polyglycylated, resulting in polyglycine chains on the gamma-carboxyl group. Glycylation is mainly limited to tubulin incorporated into axonemes (cilia and flagella) whereas glutamylation is prevalent in neuronal cells, centrioles, axonemes, and the mitotic spindle. Both modifications can coexist on the same protein on adjacent residues, and lowering polyglycylation levels increases polyglutamylation, and reciprocally. Cilia and flagella glycylation is required for their stability and maintenance. Flagella glycylation controls sperm motility. Post-translationally, some glutamate residues at the C-terminus are polyglutamylated, resulting in polyglutamate chains on the gamma-carboxyl group. Polyglutamylation plays a key role in microtubule severing by spastin (SPAST). SPAST preferentially recognizes and acts on microtubules decorated with short polyglutamate tails: severing activity by SPAST increases as the number of glutamates per tubulin rises from one to eight, but decreases beyond this glutamylation threshold. Glutamylation is also involved in cilia motility. In terms of processing, acetylation of alpha chains at Lys-40 is located inside the microtubule lumen. This modification has been correlated with increased microtubule stability, intracellular transport and ciliary assembly. Methylation of alpha chains at Lys-40 is found in mitotic microtubules and is required for normal mitosis and cytokinesis contributing to genomic stability. Post-translationally, nitration of Tyr-449 is irreversible and interferes with normal dynein intracellular distribution. In terms of processing, undergoes a tyrosination/detyrosination cycle, the cyclic removal and re-addition of a C-terminal tyrosine residue by the enzymes tubulin tyrosine carboxypeptidase (MATCAP1, VASH1 or VASH2) and tubulin tyrosine ligase (TTL), respectively. Tyrosination promotes microtubule interaction with CAP-Gly domain-containing proteins such as CLIP1, CLIP2 and DCTN1. Tyrosination regulates the initiation of dynein-dynactin motility via interaction with DCTN1, which brings the dynein-dynactin complex into contact with microtubules. In neurons, tyrosinated tubulins mediate the initiation of retrograde vesicle transport. Post-translationally, detyrosination is involved in metaphase plate congression by guiding chromosomes during mitosis: detyrosination promotes interaction with CENPE, promoting pole-proximal transport of chromosomes toward the equator. Detyrosination increases microtubules-dependent mechanotransduction in dystrophic cardiac and skeletal muscle. In cardiomyocytes, detyrosinated microtubules are required to resist to contractile compression during contraction: detyrosination promotes association with desmin (DES) at force-generating sarcomeres, leading to buckled microtubules and mechanical resistance to contraction.

Its subcellular location is the cytoplasm. It is found in the cytoskeleton. The catalysed reaction is GTP + H2O = GDP + phosphate + H(+). Its function is as follows. Tubulin is the major constituent of microtubules, a cylinder consisting of laterally associated linear protofilaments composed of alpha- and beta-tubulin heterodimers. Microtubules grow by the addition of GTP-tubulin dimers to the microtubule end, where a stabilizing cap forms. Below the cap, tubulin dimers are in GDP-bound state, owing to GTPase activity of alpha-tubulin. In Bos taurus (Bovine), this protein is Tubulin alpha-1C chain (TUBA1C).